A 685-amino-acid chain; its full sequence is ATP-dependent RNA helicase MSS116, mitochondrial (685 aa).

Residues 1-34 constitute a mitochondrion transit peptide; it reads MLVLQRIPKRALQFNGVTGTVCSTRLFHHAFNLN. Positions 42-107 are disordered; it reads SEERRYRNSN…NNGSRRRYQD (66 aa). The segment covering 58–69 has biased composition (low complexity); that stretch reads SDSNSNNKYRNS. Basic and acidic residues predominate over residues 70–86; sequence SYDDNRSRSNYGGDKRN. A compositionally biased stretch (low complexity) spans 88–99; the sequence is RNNNNYGNNRNN. A Q motif motif is present at residues 138-166; the sequence is SLLEESLLDANVHKAISAMKFESLTPVQQ. The Helicase ATP-binding domain maps to 170 to 357; the sequence is KPILTTENDV…ATIMNKKDCL (188 aa). 183-190 is an ATP binding site; the sequence is AKTGTGKT. The short motif at 298-301 is the DEAD box element; that stretch reads DEAD. A Helicase C-terminal domain is found at 386–542; that stretch reads SMVALIQSIE…EDYLNQDKEN (157 aa). The segment at 633–685 is disordered; sequence DREFDDEDRYTSRSQNNYKSKQSSKSNRFEGRNDYSNSRRSHANQKRNFTFDD. Residues 644–658 are compositionally biased toward low complexity; sequence SRSQNNYKSKQSSKS.

Belongs to the DEAD box helicase family. DDX18/HAS1 subfamily.

Its subcellular location is the mitochondrion matrix. It carries out the reaction ATP + H2O = ADP + phosphate + H(+). In terms of biological role, ATP-dependent RNA helicase required for mitochondrial splicing of group I and II introns. Also required for efficient mitochondrial translation. The chain is ATP-dependent RNA helicase MSS116, mitochondrial (MSS116) from Kluyveromyces lactis (strain ATCC 8585 / CBS 2359 / DSM 70799 / NBRC 1267 / NRRL Y-1140 / WM37) (Yeast).